The following is a 187-amino-acid chain: Cytokinin riboside 5'-monophosphate phosphoribohydrolase (187 aa).

Substrate contacts are provided by residues Glu80, 98 to 99, 115 to 121, and Thr127; these read RK and GVGTLDE.

It belongs to the LOG family.

It carries out the reaction N(6)-(dimethylallyl)adenosine 5'-phosphate + H2O = N(6)-dimethylallyladenine + D-ribose 5-phosphate. The catalysed reaction is 9-ribosyl-trans-zeatin 5'-phosphate + H2O = trans-zeatin + D-ribose 5-phosphate. Catalyzes the hydrolytic removal of ribose 5'-monophosphate from nitrogen N6-modified adenosines, the final step of bioactive cytokinin synthesis. The protein is Cytokinin riboside 5'-monophosphate phosphoribohydrolase of Mycobacterium marinum (strain ATCC BAA-535 / M).